A 338-amino-acid chain; its full sequence is 5-dehydro-2-deoxygluconokinase (338 aa).

The protein belongs to the carbohydrate kinase PfkB family.

The catalysed reaction is 5-dehydro-2-deoxy-D-gluconate + ATP = 6-phospho-5-dehydro-2-deoxy-D-gluconate + ADP + H(+). The protein operates within polyol metabolism; myo-inositol degradation into acetyl-CoA; acetyl-CoA from myo-inositol: step 5/7. Catalyzes the phosphorylation of 5-dehydro-2-deoxy-D-gluconate (2-deoxy-5-keto-D-gluconate or DKG) to 6-phospho-5-dehydro-2-deoxy-D-gluconate (DKGP). This is 5-dehydro-2-deoxygluconokinase from Mesomycoplasma hyopneumoniae (strain 7448) (Mycoplasma hyopneumoniae).